The sequence spans 221 residues: Putative hemin import ATP-binding protein HrtA (221 aa).

One can recognise an ABC transporter domain in the interval 3-221 (LVVKDIVKNF…IELEDGKITD (219 aa)). Residue 39–46 (GASGSGKT) coordinates ATP.

The protein belongs to the ABC transporter superfamily. HrtA family. As to quaternary structure, the complex is composed of two ATP-binding proteins (HrtA), two transmembrane proteins (HrtB) and a solute-binding protein.

It localises to the cell membrane. Its function is as follows. Part of the ABC transporter complex hrt involved in hemin import. Responsible for energy coupling to the transport system. This chain is Putative hemin import ATP-binding protein HrtA (hrtA), found in Staphylococcus aureus (strain MRSA252).